The sequence spans 492 residues: N-succinylglutamate 5-semialdehyde dehydrogenase (492 aa).

220–225 (GRANTG) contacts NAD(+). Catalysis depends on residues Glu-243 and Cys-277.

This sequence belongs to the aldehyde dehydrogenase family. AstD subfamily.

It carries out the reaction N-succinyl-L-glutamate 5-semialdehyde + NAD(+) + H2O = N-succinyl-L-glutamate + NADH + 2 H(+). The protein operates within amino-acid degradation; L-arginine degradation via AST pathway; L-glutamate and succinate from L-arginine: step 4/5. Catalyzes the NAD-dependent reduction of succinylglutamate semialdehyde into succinylglutamate. The sequence is that of N-succinylglutamate 5-semialdehyde dehydrogenase from Shigella boydii serotype 18 (strain CDC 3083-94 / BS512).